The following is a 366-amino-acid chain: Arfaptin-1 (366 aa).

Positions 1-78 (MAEESPKNSA…SSAPPLPCVL (78 aa)) are disordered. A2 carries the N-acetylalanine modification. S5 carries the post-translational modification Phosphoserine. Basic and acidic residues predominate over residues 22 to 35 (GDAHEHGYNRDLKH). Residues S36 and S39 each carry the phosphoserine modification. Residues 44–53 (SETQITSHGF) are compositionally biased toward polar residues. Residues S69, S79, and S125 each carry the phosphoserine modification. The AH domain maps to 146 to 346 (TVDLELEAQI…NQKQLEQTLK (201 aa)). The residue at position 354 (T354) is a Phosphothreonine.

As to quaternary structure, forms homodimers or heterodimers with ARFIP2. Interacts with non-myristoylated GTP-bound ARF3, but not to GDP-bound ARF3. Interacts with ARF1. Binds with lower affinity to ARF5 and with very little affinity to ARF6. Interacts with ARL1. Interacts with ATG9A.

It localises to the golgi apparatus. The protein resides in the trans-Golgi network membrane. In terms of biological role, plays a role in controlling biogenesis of secretory granules at the trans-Golgi network. Mechanistically, binds ARF-GTP at the neck of a growing secretory granule precursor and forms a protective scaffold. Once the granule precursor has been completely loaded, active PRKD1 phosphorylates ARFIP1 and releases it from ARFs. In turn, ARFs induce fission. Through this mechanism, ensures proper secretory granule formation at the Golgi of pancreatic beta cells. The sequence is that of Arfaptin-1 from Rattus norvegicus (Rat).